The primary structure comprises 578 residues: Sulfite reductase [NADPH] hemoprotein beta-component (578 aa).

Residues Cys-441, Cys-447, Cys-487, and Cys-491 each contribute to the [4Fe-4S] cluster site. Cys-491 serves as a coordination point for siroheme.

The protein belongs to the nitrite and sulfite reductase 4Fe-4S domain family. As to quaternary structure, alpha(8)-beta(8). The alpha component is a flavoprotein, the beta component is a hemoprotein. It depends on siroheme as a cofactor. The cofactor is [4Fe-4S] cluster.

It catalyses the reaction hydrogen sulfide + 3 NADP(+) + 3 H2O = sulfite + 3 NADPH + 4 H(+). It participates in sulfur metabolism; hydrogen sulfide biosynthesis; hydrogen sulfide from sulfite (NADPH route): step 1/1. Functionally, component of the sulfite reductase complex that catalyzes the 6-electron reduction of sulfite to sulfide. This is one of several activities required for the biosynthesis of L-cysteine from sulfate. The polypeptide is Sulfite reductase [NADPH] hemoprotein beta-component (Vibrio vulnificus (strain CMCP6)).